The primary structure comprises 222 residues: 6,7-dimethyl-8-ribityllumazine synthase, chloroplastic (222 aa).

The N-terminal 66 residues, 1–66 (MASFAASQTC…NRASFVVTNA (66 aa)), are a transit peptide targeting the chloroplast. 5-amino-6-(D-ribitylamino)uracil is bound by residues phenylalanine 89, 122-124 (AYE), and 146-148 (AVV). Position 151 to 152 (151 to 152 (DT)) interacts with (2S)-2-hydroxy-3-oxobutyl phosphate. Histidine 154 acts as the Proton donor in catalysis. Phenylalanine 179 serves as a coordination point for 5-amino-6-(D-ribitylamino)uracil. Arginine 193 lines the (2S)-2-hydroxy-3-oxobutyl phosphate pocket.

It belongs to the DMRL synthase family. Oligomer forming an icosahedral capsid.

The protein localises to the plastid. The protein resides in the chloroplast. It carries out the reaction (2S)-2-hydroxy-3-oxobutyl phosphate + 5-amino-6-(D-ribitylamino)uracil = 6,7-dimethyl-8-(1-D-ribityl)lumazine + phosphate + 2 H2O + H(+). The protein operates within cofactor biosynthesis; riboflavin biosynthesis; riboflavin from 2-hydroxy-3-oxobutyl phosphate and 5-amino-6-(D-ribitylamino)uracil: step 1/2. Functionally, catalyzes the formation of 6,7-dimethyl-8-ribityllumazine by condensation of 5-amino-6-(D-ribitylamino)uracil with 3,4-dihydroxy-2-butanone 4-phosphate. This is the penultimate step in the biosynthesis of riboflavin. The chain is 6,7-dimethyl-8-ribityllumazine synthase, chloroplastic from Spinacia oleracea (Spinach).